The chain runs to 473 residues: Probable lipid II flippase MurJ (473 aa).

13 helical membrane passes run 31 to 51 (TFGA…PFFL), 90 to 110 (LVTL…ASIF), 125 to 145 (LIRL…FYSV), 153 to 173 (FLPA…CLFG), 177 to 197 (WAAA…LPFG), 215 to 235 (FFGT…DVNV), 253 to 273 (LYQL…LSTL), 300 to 320 (IGLM…GAFT), 327 to 347 (SAQI…FNLL), 360 to 380 (PFFA…ILGF), 382 to 402 (MGAS…FVFL), 414 to 434 (IFKI…LRGS), and 439 to 459 (LGTI…SKLL).

Belongs to the MurJ/MviN family.

It is found in the cell inner membrane. It functions in the pathway cell wall biogenesis; peptidoglycan biosynthesis. Functionally, involved in peptidoglycan biosynthesis. Transports lipid-linked peptidoglycan precursors from the inner to the outer leaflet of the cytoplasmic membrane. The chain is Probable lipid II flippase MurJ from Thermotoga maritima (strain ATCC 43589 / DSM 3109 / JCM 10099 / NBRC 100826 / MSB8).